The chain runs to 38 residues: Potassium channel toxin alpha-KTx 3.3 (38 aa).

3 cysteine pairs are disulfide-bonded: Cys8–Cys28, Cys14–Cys33, and Cys18–Cys35. The segment at 26-33 (GKCMNRKC) is interaction with Ca(2+)-activated K(+) channels.

The protein belongs to the short scorpion toxin superfamily. Potassium channel inhibitor family. Alpha-KTx 03 subfamily. As to expression, expressed by the venom gland.

Its subcellular location is the secreted. In terms of biological role, potent inhibitor of shaker potassium channels as well as the mammalian homologs of shaker. The chain is Potassium channel toxin alpha-KTx 3.3 from Leiurus hebraeus (Hebrew deathstalker scorpion).